The sequence spans 386 residues: O-phospho-L-seryl-tRNA:Cys-tRNA synthase (386 aa).

Residues 89 to 90, Asn196, and 219 to 221 each bind pyridoxal 5'-phosphate; these read AR and SGH. Lys222 carries the post-translational modification N6-(pyridoxal phosphate)lysine.

It belongs to the SepCysS family. In terms of assembly, homodimer. Interacts with SepRS. It depends on pyridoxal 5'-phosphate as a cofactor.

It carries out the reaction O-phospho-L-seryl-tRNA(Cys) + hydrogen sulfide + H(+) = L-cysteinyl-tRNA(Cys) + phosphate. Functionally, converts O-phospho-L-seryl-tRNA(Cys) (Sep-tRNA(Cys)) to L-cysteinyl-tRNA(Cys) (Cys-tRNA(Cys)). This chain is O-phospho-L-seryl-tRNA:Cys-tRNA synthase, found in Methanosarcina acetivorans (strain ATCC 35395 / DSM 2834 / JCM 12185 / C2A).